The chain runs to 202 residues: Indolepyruvate oxidoreductase subunit IorB (202 aa).

In terms of assembly, heterodimer of the IorA and IorB subunits.

The enzyme catalyses indole-3-pyruvate + 2 oxidized [2Fe-2S]-[ferredoxin] + CoA = (indol-3-yl)acetyl-CoA + 2 reduced [2Fe-2S]-[ferredoxin] + CO2 + H(+). Functionally, catalyzes the ferredoxin-dependent oxidative decarboxylation of arylpyruvates. The chain is Indolepyruvate oxidoreductase subunit IorB (iorB) from Pyrococcus horikoshii (strain ATCC 700860 / DSM 12428 / JCM 9974 / NBRC 100139 / OT-3).